The following is a 447-amino-acid chain: Serine/threonine-protein phosphatase 2A 55 kDa regulatory subunit B delta isoform (447 aa).

WD repeat units follow at residues 26–65, 91–132, 175–213, 224–264, 283–321, 338–379, and 414–447; these read AEAD…KSRP, EIEE…KRVE, AHTY…RSFN, ELTE…LCDR, EIIS…RPVE, ENDC…DITL, and DFNK…DKVN.

The protein belongs to the phosphatase 2A regulatory subunit B family. As to quaternary structure, PP2A consists of a common heterodimeric core enzyme, composed of a 36 kDa catalytic subunit (subunit C) and a 65 kDa constant regulatory subunit (PR65 or subunit A), that associates with a variety of regulatory subunits. Proteins that associate with the core dimer include three families of regulatory subunits B (the R2/B/PR55/B55, R3/B''/PR72/PR130/PR59 and R5/B'/B56 families), the 48 kDa variable regulatory subunit, viral proteins, and cell signaling molecules. Interacts with ensa (when phosphorylated at 'Ser-67') and arpp19 (when phosphorylated at 'Ser-67'), leading to inhibit PP2A activity.

It is found in the cytoplasm. Functionally, substrate-recognition subunit of protein phosphatase 2A (PP2A) that plays a key role in cell cycle by controlling mitosis entry and exit. The activity of PP2A complexes containing ppp2r2d (PR55-delta) fluctuate during the cell cycle: the activity is high in interphase and low in mitosis. During mitosis, activity of PP2A is inhibited via interaction with phosphorylated ensa and arpp19 inhibitors. PP2A complexes containing ppp2r2d (PR55-delta) also regulate the activity of TGF-beta/Activin/Nodal signaling by restricting receptor activity. Within the PP2A complexes, the B regulatory subunits modulate substrate selectivity and catalytic activity, and may also direct the localization of the catalytic enzyme to a particular subcellular compartment. This chain is Serine/threonine-protein phosphatase 2A 55 kDa regulatory subunit B delta isoform (ppp2r2d), found in Xenopus tropicalis (Western clawed frog).